Reading from the N-terminus, the 120-residue chain is Small ribosomal subunit protein uS13 (120 aa).

Residues 92-120 (RRGLPCRGQRTRTNARTRKGPRKPIAGKK) are disordered.

This sequence belongs to the universal ribosomal protein uS13 family. As to quaternary structure, part of the 30S ribosomal subunit. Forms a loose heterodimer with protein S19. Forms two bridges to the 50S subunit in the 70S ribosome.

Located at the top of the head of the 30S subunit, it contacts several helices of the 16S rRNA. In the 70S ribosome it contacts the 23S rRNA (bridge B1a) and protein L5 of the 50S subunit (bridge B1b), connecting the 2 subunits; these bridges are implicated in subunit movement. Contacts the tRNAs in the A and P-sites. This chain is Small ribosomal subunit protein uS13, found in Laribacter hongkongensis (strain HLHK9).